Here is a 292-residue protein sequence, read N- to C-terminus: GTP cyclohydrolase FolE2 (292 aa).

The protein belongs to the GTP cyclohydrolase IV family.

It catalyses the reaction GTP + H2O = 7,8-dihydroneopterin 3'-triphosphate + formate + H(+). The protein operates within cofactor biosynthesis; 7,8-dihydroneopterin triphosphate biosynthesis; 7,8-dihydroneopterin triphosphate from GTP: step 1/1. Functionally, converts GTP to 7,8-dihydroneopterin triphosphate. The chain is GTP cyclohydrolase FolE2 from Staphylococcus aureus (strain MRSA252).